The sequence spans 488 residues: MNKPMEDAAITDVKKRYSAGVLKYRQMGYWMPDYVPKDTDTICLFRITPQDGVDPVEAAAAVAGESSTATWTVVWTDRLTACDSYRAKAYKVEPVPGIPGQFFAWVAYDIILFEEGSIANMTASLIGNVFSFKPLKAARLEDIRIPVAYVKTFKGPPTGLVVERERLDKFGRPLLGATTKPKLGLSGRNYGRVVYEGLKGGLDFMKDDENINSQPFMHWRDRYLYVMDAVNKASAATGEIKGSYLNVTAATMEDMYERAEFAKELGSVIVMIDLVIGYTAIQSMSNWARRNDVILHLHRAGHGTYTRQKNHGVSFRVIAKWMRLAGVDHIHTGTAVGKLEGDPMTVQGYYNVCRDSVTKQDLPRGLFFDQDWADLKKVMPVASGGIHAGQMHQLIDLFGDDVVLQFGGGTIGHPQGIQAGAVANRVALECMVKARNEGRDIKNEGPEILRKAAQFCAPLKQALDTWGEISFNYTPTDTSDYAVTPGVA.

Residues asparagine 128 and threonine 178 each coordinate substrate. Catalysis depends on lysine 180, which acts as the Proton acceptor. Lysine 182 serves as a coordination point for substrate. 3 residues coordinate Mg(2+): lysine 206, aspartate 208, and glutamate 209. Lysine 206 carries the N6-carboxylysine modification. The active-site Proton acceptor is histidine 298. Substrate is bound by residues arginine 299, histidine 331, and serine 383.

This sequence belongs to the RuBisCO large chain family. Type I subfamily. In terms of assembly, heterohexadecamer of 8 large chains and 8 small chains. The cofactor is Mg(2+).

The catalysed reaction is 2 (2R)-3-phosphoglycerate + 2 H(+) = D-ribulose 1,5-bisphosphate + CO2 + H2O. It catalyses the reaction D-ribulose 1,5-bisphosphate + O2 = 2-phosphoglycolate + (2R)-3-phosphoglycerate + 2 H(+). In terms of biological role, ruBisCO catalyzes two reactions: the carboxylation of D-ribulose 1,5-bisphosphate, the primary event in carbon dioxide fixation, as well as the oxidative fragmentation of the pentose substrate. Both reactions occur simultaneously and in competition at the same active site. The sequence is that of Ribulose bisphosphate carboxylase large chain 1 from Methylibium petroleiphilum (strain ATCC BAA-1232 / LMG 22953 / PM1).